The chain runs to 194 residues: Probable thymidylate kinase (194 aa).

7–14 is an ATP binding site; the sequence is GIDGSGKT.

This sequence belongs to the thymidylate kinase family.

It catalyses the reaction dTMP + ATP = dTDP + ADP. The polypeptide is Probable thymidylate kinase (tmk) (Methanothermobacter thermautotrophicus (strain ATCC 29096 / DSM 1053 / JCM 10044 / NBRC 100330 / Delta H) (Methanobacterium thermoautotrophicum)).